Consider the following 69-residue polypeptide: Beta-defensin 122 (69 aa).

An N-terminal signal peptide occupies residues 1–19 (MKPFLVTLAVLLLFFQVTA). 3 disulfides stabilise this stretch: Cys-26–Cys-53, Cys-33–Cys-47, and Cys-37–Cys-54.

This sequence belongs to the beta-defensin family.

The protein resides in the secreted. Has antibacterial activity. The polypeptide is Beta-defensin 122 (DEFB122) (Macaca mulatta (Rhesus macaque)).